Reading from the N-terminus, the 256-residue chain is Small ribosomal subunit protein eS1 (256 aa).

Residues 1–18 show a composition bias toward basic residues; it reads MAVGKNKRLSKGKKGLKK. The segment at 1–20 is disordered; sequence MAVGKNKRLSKGKKGLKKRT. Ala2 is modified (N-acetylalanine; partial).

Belongs to the eukaryotic ribosomal protein eS1 family. As to quaternary structure, component of the small ribosomal subunit. Mature ribosomes consist of a small (40S) and a large (60S) subunit. The 40S subunit contains about 33 different proteins and 1 molecule of RNA (18S). The 60S subunit contains about 49 different proteins and 3 molecules of RNA (25S, 5.8S and 5S).

The protein localises to the cytoplasm. The protein is Small ribosomal subunit protein eS1 (rps1) of Talaromyces marneffei (strain ATCC 18224 / CBS 334.59 / QM 7333) (Penicillium marneffei).